Consider the following 544-residue polypeptide: Carboxypeptidase Y homolog A (544 aa).

Residues 1–17 (MKSLALALLVGGAIASG) form the signal peptide. A propeptide spanning residues 18 to 124 (PQQQVLREPV…RLDTYDLRVK (107 aa)) is cleaved from the precursor. 5 disulfides stabilise this stretch: C178–C417, C312–C326, C336–C359, C343–C352, and C381–C387. A glycan (N-linked (GlcNAc...) asparagine) is linked at N209. S265 is an active-site residue. Residue D456 is part of the active site. N506 carries an N-linked (GlcNAc...) asparagine glycan. The active site involves H517.

It belongs to the peptidase S10 family.

The protein resides in the vacuole. It carries out the reaction Release of a C-terminal amino acid with broad specificity.. Vacuolar carboxypeptidase involved in degradation of small peptides. Digests preferentially peptides containing an aliphatic or hydrophobic residue in P1' position, as well as methionine, leucine or phenylalanine in P1 position of ester substrate. This is Carboxypeptidase Y homolog A (CPYA) from Ajellomyces capsulatus (strain G186AR / H82 / ATCC MYA-2454 / RMSCC 2432) (Darling's disease fungus).